Here is a 184-residue protein sequence, read N- to C-terminus: Translocon-associated protein subunit beta (184 aa).

Residues methionine 1–cysteine 20 form the signal peptide. Residues glutamate 21–serine 147 lie on the Lumenal side of the membrane. Residue asparagine 94 is glycosylated (N-linked (GlcNAc...) asparagine). The helical transmembrane segment at leucine 148–tyrosine 168 threads the bilayer. Topologically, residues serine 169–lysine 184 are cytoplasmic.

This sequence belongs to the TRAP-beta family. As to quaternary structure, heterotrimer of TRAP-alpha, TRAP-beta and TRAP-gamma.

The protein resides in the endoplasmic reticulum membrane. In terms of biological role, TRAP proteins are part of a complex whose function is to bind calcium to the ER membrane and thereby regulate the retention of ER resident proteins. This Dictyostelium discoideum (Social amoeba) protein is Translocon-associated protein subunit beta (ssr2).